We begin with the raw amino-acid sequence, 153 residues long: Peptide methionine sulfoxide reductase B6 (153 aa).

In terms of domain architecture, MsrB spans 28 to 149 (NEEWRTVLSP…NSVALKFSSA (122 aa)). Zn(2+) is bound by residues Cys-67, Cys-70, Cys-113, and Cys-116. Residues Cys-85 and Cys-138 are joined by a disulfide bond. Cys-138 (nucleophile) is an active-site residue.

This sequence belongs to the MsrB Met sulfoxide reductase family. Requires Zn(2+) as cofactor.

Its subcellular location is the cytoplasm. It localises to the cytosol. It carries out the reaction L-methionyl-[protein] + [thioredoxin]-disulfide + H2O = L-methionyl-(R)-S-oxide-[protein] + [thioredoxin]-dithiol. In terms of biological role, catalyzes the reduction of methionine sulfoxide (MetSO) to methionine in proteins. Plays a protective role against oxidative stress by restoring activity to proteins that have been inactivated by methionine oxidation. MSRB family specifically reduces the MetSO R-enantiomer. The polypeptide is Peptide methionine sulfoxide reductase B6 (MSRB6) (Arabidopsis thaliana (Mouse-ear cress)).